Consider the following 296-residue polypeptide: tRNA dimethylallyltransferase (296 aa).

An ATP-binding site is contributed by 2-9 (GPTASGKT). 4-9 (TASGKT) is a binding site for substrate. Interaction with substrate tRNA stretches follow at residues 27-30 (DSAL), 151-155 (QRLSR), and 232-237 (RCVGYR).

The protein belongs to the IPP transferase family. As to quaternary structure, monomer. Mg(2+) serves as cofactor.

It carries out the reaction adenosine(37) in tRNA + dimethylallyl diphosphate = N(6)-dimethylallyladenosine(37) in tRNA + diphosphate. Its function is as follows. Catalyzes the transfer of a dimethylallyl group onto the adenine at position 37 in tRNAs that read codons beginning with uridine, leading to the formation of N6-(dimethylallyl)adenosine (i(6)A). This Shewanella sp. (strain MR-7) protein is tRNA dimethylallyltransferase.